The primary structure comprises 572 residues: MGSSNLELIFDSVGHFGRYQIFLYFICAFQNISCGIHYLASVFLSVSPQHTCRPPGNVSQVLFQDLSTWQLEDIWTQFSVGREDRILVQLQDGAIWELTSCQRFRRDDQSSLDYEYSGQKSSFPCLDGYIYDRSKWLSTVVTQWDLVCNREWFGRLIQPTFMFGVLLGAVIFGYLSDRAGRRLVLWASSTGVFLFGIAAAFTFDYYSFIVARFLLAISGSGYLVVVFVYVTEFVGMKSRTWASIHLHSFFAFGTMVVALTGYFVRTWWIYQIVLSSVTVPFVLCCWMLPETPFWLISGGKYEEAQKVIDTMAKWNRTRPCKLSEILSLDHDGSAGNKPSQVEKHTLSELFYDWSIGTRTLILWLIWFTGCLGFYTFSLNSVHLGGSEYLNLFLMGVVEIPAYVLVCLGMDRVGRRNILIFSLLSSAVTSGVIMVIPKDYHVWLVVASMAGKFFIGAAFGLIYLYTAELYPTIVRSLAVGSGSTVGRVGSIVAPLCIYLSSVWIFMPQLLVGTLALVSGVLTFLLPETLRRPLTTTWEETEKESSSGKLLSTTSNTVLENVTVENSEDSSLNK.

The chain crosses the membrane as a helical span at residues 21–41 (IFLYFICAFQNISCGIHYLAS). N-linked (GlcNAc...) asparagine glycosylation is present at asparagine 57. A run of 5 helical transmembrane segments spans residues 156–176 (LIQP…GYLS), 183–203 (LVLW…AFTF), 208–228 (FIVA…VVFV), 244–264 (IHLH…GYFV), and 268–288 (WIYQ…CWML). A glycan (N-linked (GlcNAc...) asparagine) is linked at asparagine 315. 6 consecutive transmembrane segments (helical) span residues 359–379 (TLIL…FSLN), 389–409 (LNLF…CLGM), 416–436 (NILI…MVIP), 441–461 (VWLV…FGLI), 476–496 (LAVG…PLCI), and 503–523 (IFMP…LTFL). Asparagine 559 is a glycosylation site (N-linked (GlcNAc...) asparagine).

It belongs to the major facilitator (TC 2.A.1) superfamily. Organic cation transporter (TC 2.A.1.19) family.

The protein localises to the cell membrane. The catalysed reaction is (R)-carnitine(in) = (R)-carnitine(out). The enzyme catalyses spermidine(in) = spermidine(out). Facilitative organic cation transporter that mediates the transport of carnitine as well as the polyamine spermidine. Mediates the partially Na(+)-dependent bidirectional transport of carnitine. May mediate L-carnitine secretion from testis epididymal epithelium into the lumen which is involved in the maturation of spermatozoa. The sequence is that of Solute carrier family 22 member 16 (SLC22A16) from Bos taurus (Bovine).